The primary structure comprises 173 residues: MDITIQHPWFKRALGPLIPSRLFDQFFGEGLFEYDLLPLLSSTISPYYRHSLFRSVLESGISEVRSDRDKFTIMLDVKHFSPEDLSVKIIDDFVEVHGKHNERQDDHGYISREFHRRYRLPSSVDQSAVTCVLSADGMLTFSGSKVQSNVDTIHSDRPIPVAREEKPTSAPSS.

An N-acetylmethionine modification is found at M1. Residues 52–164 (LFRSVLESGI…SDRPIPVARE (113 aa)) enclose the sHSP domain. Positions 100, 102, 107, and 154 each coordinate Zn(2+). The segment at 152 to 173 (TIHSDRPIPVAREEKPTSAPSS) is disordered. Positions 153 to 167 (IHSDRPIPVAREEKP) are enriched in basic and acidic residues.

It belongs to the small heat shock protein (HSP20) family. Heteropolymer composed of three CRYAA and one CRYAB subunits. Inter-subunit bridging via zinc ions enhances stability, which is crucial as there is no protein turn over in the lens. Can also form homodimers and homotetramers (dimers of dimers) which serve as the building blocks of homooligomers. Within homooligomers, the zinc-binding motif is created from residues of 3 different molecules. His-100 and Glu-102 from one molecule are ligands of the zinc ion, and His-107 and His-154 residues from additional molecules complete the site with tetrahedral coordination geometry.

It localises to the cytoplasm. Its subcellular location is the nucleus. Contributes to the transparency and refractive index of the lens. May act as a chaperone, preventing aggregation of various proteins under a wide range of stress conditions. This is Alpha-crystallin A chain (CRYAA) from Alligator mississippiensis (American alligator).